A 250-amino-acid polypeptide reads, in one-letter code: Ino eighty subunit 3 (250 aa).

A disordered region spans residues Pro29–His70. Residues Ser52–His70 show a composition bias toward low complexity. Residues Ser157 and Ser211 each carry the phosphoserine modification.

As to quaternary structure, component of the chromatin-remodeling INO80 complex, at least composed of ARP4, ARP5, ARP8, RVB1, RVB2, TAF14, NHP10, IES1, IES3, IES4, IES6, ACT1, IES2, IES5 and INO80.

The protein resides in the nucleus. Functionally, probably involved in transcription regulation via its interaction with the INO80 complex, a chromatin-remodeling complex. This Saccharomyces cerevisiae (strain ATCC 204508 / S288c) (Baker's yeast) protein is Ino eighty subunit 3 (IES3).